The primary structure comprises 452 residues: Ribosomal protein uS12 methylthiotransferase RimO (452 aa).

The MTTase N-terminal domain maps to 5 to 116; the sequence is PTIAFSHLGC…IVDVLQRTES (112 aa). Cys14, Cys50, Cys79, Cys154, Cys158, and Cys161 together coordinate [4Fe-4S] cluster. One can recognise a Radical SAM core domain in the interval 140-369; the sequence is TTTSAVAYLR…MATQQPIAER (230 aa). In terms of domain architecture, TRAM spans 372–438; that stretch reads RAQIGRLVDV…IYDLHGEVAS (67 aa).

This sequence belongs to the methylthiotransferase family. RimO subfamily. The cofactor is [4Fe-4S] cluster.

Its subcellular location is the cytoplasm. The enzyme catalyses L-aspartate(89)-[ribosomal protein uS12]-hydrogen + (sulfur carrier)-SH + AH2 + 2 S-adenosyl-L-methionine = 3-methylsulfanyl-L-aspartate(89)-[ribosomal protein uS12]-hydrogen + (sulfur carrier)-H + 5'-deoxyadenosine + L-methionine + A + S-adenosyl-L-homocysteine + 2 H(+). Its function is as follows. Catalyzes the methylthiolation of an aspartic acid residue of ribosomal protein uS12. The chain is Ribosomal protein uS12 methylthiotransferase RimO from Synechococcus elongatus (strain ATCC 33912 / PCC 7942 / FACHB-805) (Anacystis nidulans R2).